The following is a 163-amino-acid chain: Nucleotide-binding protein ROP_16630 (163 aa).

The protein belongs to the YajQ family.

Its function is as follows. Nucleotide-binding protein. The polypeptide is Nucleotide-binding protein ROP_16630 (Rhodococcus opacus (strain B4)).